A 362-amino-acid chain; its full sequence is Phosphoserine aminotransferase (362 aa).

Arginine 42 lines the L-glutamate pocket. Residues alanine 76–arginine 77, tryptophan 102, threonine 153, aspartate 174, and glutamine 197 each bind pyridoxal 5'-phosphate. Lysine 198 carries the N6-(pyridoxal phosphate)lysine modification. A pyridoxal 5'-phosphate-binding site is contributed by asparagine 239–threonine 240.

It belongs to the class-V pyridoxal-phosphate-dependent aminotransferase family. SerC subfamily. In terms of assembly, homodimer. The cofactor is pyridoxal 5'-phosphate.

The protein localises to the cytoplasm. It carries out the reaction O-phospho-L-serine + 2-oxoglutarate = 3-phosphooxypyruvate + L-glutamate. The enzyme catalyses 4-(phosphooxy)-L-threonine + 2-oxoglutarate = (R)-3-hydroxy-2-oxo-4-phosphooxybutanoate + L-glutamate. It participates in amino-acid biosynthesis; L-serine biosynthesis; L-serine from 3-phospho-D-glycerate: step 2/3. Its pathway is cofactor biosynthesis; pyridoxine 5'-phosphate biosynthesis; pyridoxine 5'-phosphate from D-erythrose 4-phosphate: step 3/5. In terms of biological role, catalyzes the reversible conversion of 3-phosphohydroxypyruvate to phosphoserine and of 3-hydroxy-2-oxo-4-phosphonooxybutanoate to phosphohydroxythreonine. The protein is Phosphoserine aminotransferase of Xenorhabdus nematophila (strain ATCC 19061 / DSM 3370 / CCUG 14189 / LMG 1036 / NCIMB 9965 / AN6).